Consider the following 212-residue polypeptide: Leucine efflux protein (212 aa).

The next 6 membrane-spanning stretches (helical) occupy residues 12 to 32 (TYLVGAIFIVLVPGPNTLFVL), 49 to 69 (GVFIGDAVLMFLAWAGVATLI), 71 to 91 (TTPILFNIVRYLGAFYLLYLG), 122 to 142 (ILSLTNPKAILFYVSFFVQFI), 153 to 173 (FFILAATLELVSFCYLSFLII), and 188 to 208 (LAKVGNSLIGLMFVGFAARLA).

It belongs to the Rht family.

The protein resides in the cell inner membrane. The catalysed reaction is L-leucine(in) + H(+)(out) = L-leucine(out) + H(+)(in). With respect to regulation, leucine export is inhibited by the proton ionophore carbonyl cyanide m-chlorophenylhydrazone (CCCP). Functionally, exporter of leucine. Can also transport its natural analog L-alpha-amino-n-butyric acid and some other structurally unrelated amino acids. Leucine excretion is probably driven by proton motive force. This is Leucine efflux protein from Escherichia coli (strain K12).